The sequence spans 333 residues: Quinolinate synthase (333 aa).

His41 and Ser58 together coordinate iminosuccinate. Cys103 provides a ligand contact to [4Fe-4S] cluster. Iminosuccinate is bound by residues 129 to 131 and Ser146; that span reads YIN. Position 189 (Cys189) interacts with [4Fe-4S] cluster. Iminosuccinate contacts are provided by residues 215–217 and Thr232; that span reads HPE. A [4Fe-4S] cluster-binding site is contributed by Cys282.

Belongs to the quinolinate synthase family. Type 2 subfamily. The cofactor is [4Fe-4S] cluster.

Its subcellular location is the cytoplasm. The catalysed reaction is iminosuccinate + dihydroxyacetone phosphate = quinolinate + phosphate + 2 H2O + H(+). The protein operates within cofactor biosynthesis; NAD(+) biosynthesis; quinolinate from iminoaspartate: step 1/1. Its function is as follows. Catalyzes the condensation of iminoaspartate with dihydroxyacetone phosphate to form quinolinate. The protein is Quinolinate synthase of Prochlorococcus marinus (strain MIT 9313).